Consider the following 166-residue polypeptide: Lipoprotein signal peptidase (166 aa).

A run of 3 helical transmembrane segments spans residues 12-32 (WLWLVVVVLIIDLGSKYLILQ), 70-90 (WFFAGIAIGICVILLVMMYRS), and 102-122 (ALIIGGALGNLFDRLWHGFVV). Active-site residues include Asp123 and Asp141. Residues 137-157 (FNLADTAICIGAALIVLEGFL) form a helical membrane-spanning segment.

Belongs to the peptidase A8 family.

Its subcellular location is the cell inner membrane. The enzyme catalyses Release of signal peptides from bacterial membrane prolipoproteins. Hydrolyzes -Xaa-Yaa-Zaa-|-(S,diacylglyceryl)Cys-, in which Xaa is hydrophobic (preferably Leu), and Yaa (Ala or Ser) and Zaa (Gly or Ala) have small, neutral side chains.. It participates in protein modification; lipoprotein biosynthesis (signal peptide cleavage). This protein specifically catalyzes the removal of signal peptides from prolipoproteins. The sequence is that of Lipoprotein signal peptidase from Salmonella typhi.